A 349-amino-acid chain; its full sequence is Core protein VP7 (349 aa).

An N-linked (GlcNAc...) asparagine; by host glycan is attached at asparagine 287.

Belongs to the orbivirus VP7 family. Homotrimer that assemble in a complex of 260 capsomers on an inner scaffold composed of VP3.

The protein resides in the virion. Its function is as follows. The VP7 protein is one of the five proteins (with VP1, VP3, VP4, and VP6) which form the inner capsid of the virus. This Bluetongue virus 1 (isolate Australia) (BTV 1) protein is Core protein VP7 (Segment-7).